Reading from the N-terminus, the 327-residue chain is Porphobilinogen deaminase (327 aa).

S-(dipyrrolylmethanemethyl)cysteine is present on Cys-251.

The protein belongs to the HMBS family. Requires dipyrromethane as cofactor.

The enzyme catalyses 4 porphobilinogen + H2O = hydroxymethylbilane + 4 NH4(+). It functions in the pathway porphyrin-containing compound metabolism; protoporphyrin-IX biosynthesis; coproporphyrinogen-III from 5-aminolevulinate: step 2/4. Functionally, catalyzes the tetrapolymerization of the monopyrrole porphobilinogen (PBG) into the hydroxymethylbilane pre-uroporphyrinogen in several discrete steps. This is Porphobilinogen deaminase (HEM3) from Saccharomyces cerevisiae (strain ATCC 204508 / S288c) (Baker's yeast).